Here is a 942-residue protein sequence, read N- to C-terminus: Homeobox protein 2 (942 aa).

Composition is skewed to low complexity over residues 32–87 (ECNE…NINE) and 98–130 (SPYSSPSSSISSPSRSPSPNSPASSSPIHSPIP). 4 disordered regions span residues 32–149 (ECNE…PQNI), 161–494 (LESP…RLKK), 537–580 (RQEK…QGGA), and 609–942 (FKNN…CQQN). A compositionally biased stretch (polar residues) spans 131-149 (NTNFKQSGEYQSIPSPQNI). Low complexity predominate over residues 163 to 261 (SPNSSNSSPS…PSSNLSKSNS (99 aa)). Residues 269–290 (QAPSNTSSPQLLSPNHNQQRIS) are compositionally biased toward polar residues. Low complexity-rich tracts occupy residues 299-430 (NNNH…NSSP) and 450-464 (NNNNNNNNNNNSNSS). Residues 465 to 481 (FDEYQPQQKVSRSNSPN) show a composition bias toward polar residues. The homeobox DNA-binding region spans 485-544 (EKKRRTRLKKEQADILKTFFDNDDYPTKDDKETLANRLGMSYCAVTTWFSNKRQEKKRRG). Low complexity-rich tracts occupy residues 609-621 (FKNNNMDNNNKNV), 628-685 (NNNN…GSSD), 694-737 (NNNN…NNNN), 752-764 (NNNNNNNNNNNNN), 776-864 (SDDT…YLNN), and 890-927 (NNFNGDNNNNNNNKNNNNNNQNNNGNGNNNNNNNNDNN). Positions 835–865 (NNNNNNNNQNNNNNNNNNQYNNNNKNYLNNI) form a coiled coil.

Its subcellular location is the nucleus. Putative transcription factor that may potentiate the function of warA. The chain is Homeobox protein 2 (hbx2) from Dictyostelium discoideum (Social amoeba).